The primary structure comprises 612 residues: Alpha-glycerophosphate oxidase (612 aa).

D21–E49 is an FAD binding site. Basic and acidic residues predominate over residues V398 to D408. Residues V398–F418 form a disordered region.

Belongs to the FAD-dependent glycerol-3-phosphate dehydrogenase family. FAD serves as cofactor.

It localises to the cytoplasm. It catalyses the reaction sn-glycerol 3-phosphate + O2 = dihydroxyacetone phosphate + H2O2. The sequence is that of Alpha-glycerophosphate oxidase (glpO) from Streptococcus pyogenes serotype M3 (strain ATCC BAA-595 / MGAS315).